Reading from the N-terminus, the 209-residue chain is Thiamine-phosphate synthase (209 aa).

4-amino-2-methyl-5-(diphosphooxymethyl)pyrimidine-binding positions include 39–43 and Asn-71; that span reads QLREK. Mg(2+) contacts are provided by Asp-72 and Asp-91. Residue Ser-110 participates in 4-amino-2-methyl-5-(diphosphooxymethyl)pyrimidine binding. 136 to 138 contributes to the 2-[(2R,5Z)-2-carboxy-4-methylthiazol-5(2H)-ylidene]ethyl phosphate binding site; it reads TGT. Residue Lys-139 participates in 4-amino-2-methyl-5-(diphosphooxymethyl)pyrimidine binding. Residues Gly-166 and 186 to 187 contribute to the 2-[(2R,5Z)-2-carboxy-4-methylthiazol-5(2H)-ylidene]ethyl phosphate site; that span reads VS.

The protein belongs to the thiamine-phosphate synthase family. It depends on Mg(2+) as a cofactor.

The enzyme catalyses 2-[(2R,5Z)-2-carboxy-4-methylthiazol-5(2H)-ylidene]ethyl phosphate + 4-amino-2-methyl-5-(diphosphooxymethyl)pyrimidine + 2 H(+) = thiamine phosphate + CO2 + diphosphate. It catalyses the reaction 2-(2-carboxy-4-methylthiazol-5-yl)ethyl phosphate + 4-amino-2-methyl-5-(diphosphooxymethyl)pyrimidine + 2 H(+) = thiamine phosphate + CO2 + diphosphate. The catalysed reaction is 4-methyl-5-(2-phosphooxyethyl)-thiazole + 4-amino-2-methyl-5-(diphosphooxymethyl)pyrimidine + H(+) = thiamine phosphate + diphosphate. Its pathway is cofactor biosynthesis; thiamine diphosphate biosynthesis; thiamine phosphate from 4-amino-2-methyl-5-diphosphomethylpyrimidine and 4-methyl-5-(2-phosphoethyl)-thiazole: step 1/1. Functionally, condenses 4-methyl-5-(beta-hydroxyethyl)thiazole monophosphate (THZ-P) and 2-methyl-4-amino-5-hydroxymethyl pyrimidine pyrophosphate (HMP-PP) to form thiamine monophosphate (TMP). This chain is Thiamine-phosphate synthase, found in Clostridium beijerinckii (strain ATCC 51743 / NCIMB 8052) (Clostridium acetobutylicum).